An 826-amino-acid polypeptide reads, in one-letter code: Leucine--tRNA ligase (826 aa).

Residues 42 to 52 carry the 'HIGH' region motif; that stretch reads PYPSGNLHMGH. The 'KMSKS' region signature appears at 581–585; that stretch reads KMSKS. ATP is bound at residue K584.

It belongs to the class-I aminoacyl-tRNA synthetase family.

The protein resides in the cytoplasm. The enzyme catalyses tRNA(Leu) + L-leucine + ATP = L-leucyl-tRNA(Leu) + AMP + diphosphate. This Desulforudis audaxviator (strain MP104C) protein is Leucine--tRNA ligase.